A 187-amino-acid polypeptide reads, in one-letter code: Ribosome-recycling factor (187 aa).

This sequence belongs to the RRF family.

The protein localises to the cytoplasm. In terms of biological role, responsible for the release of ribosomes from messenger RNA at the termination of protein biosynthesis. May increase the efficiency of translation by recycling ribosomes from one round of translation to another. The protein is Ribosome-recycling factor of Paracoccus denitrificans (strain Pd 1222).